Here is a 733-residue protein sequence, read N- to C-terminus: Phosphoribosylformylglycinamidine synthase subunit PurL (733 aa).

Histidine 44 is a catalytic residue. The ATP site is built by tyrosine 47 and lysine 86. Residue glutamate 88 participates in Mg(2+) binding. Residues 89 to 92 (SHNH) and arginine 111 contribute to the substrate site. Histidine 90 acts as the Proton acceptor in catalysis. Mg(2+) is bound at residue aspartate 112. Glutamine 240 is a substrate binding site. Residue aspartate 268 coordinates Mg(2+). 312–314 (ESQ) provides a ligand contact to substrate. Positions 496 and 533 each coordinate ATP. Asparagine 534 provides a ligand contact to Mg(2+). Serine 536 lines the substrate pocket.

The protein belongs to the FGAMS family. In terms of assembly, monomer. Part of the FGAM synthase complex composed of 1 PurL, 1 PurQ and 2 PurS subunits.

The protein resides in the cytoplasm. The catalysed reaction is N(2)-formyl-N(1)-(5-phospho-beta-D-ribosyl)glycinamide + L-glutamine + ATP + H2O = 2-formamido-N(1)-(5-O-phospho-beta-D-ribosyl)acetamidine + L-glutamate + ADP + phosphate + H(+). It functions in the pathway purine metabolism; IMP biosynthesis via de novo pathway; 5-amino-1-(5-phospho-D-ribosyl)imidazole from N(2)-formyl-N(1)-(5-phospho-D-ribosyl)glycinamide: step 1/2. In terms of biological role, part of the phosphoribosylformylglycinamidine synthase complex involved in the purines biosynthetic pathway. Catalyzes the ATP-dependent conversion of formylglycinamide ribonucleotide (FGAR) and glutamine to yield formylglycinamidine ribonucleotide (FGAM) and glutamate. The FGAM synthase complex is composed of three subunits. PurQ produces an ammonia molecule by converting glutamine to glutamate. PurL transfers the ammonia molecule to FGAR to form FGAM in an ATP-dependent manner. PurS interacts with PurQ and PurL and is thought to assist in the transfer of the ammonia molecule from PurQ to PurL. This is Phosphoribosylformylglycinamidine synthase subunit PurL from Wolinella succinogenes (strain ATCC 29543 / DSM 1740 / CCUG 13145 / JCM 31913 / LMG 7466 / NCTC 11488 / FDC 602W) (Vibrio succinogenes).